A 486-amino-acid chain; its full sequence is Arginine/agmatine antiporter (486 aa).

The next 12 helical transmembrane spans lie at 12–32 (LGAIALAGMVISSMIGGGIFS), 41–61 (AGAGAIILAWILTGIGMFFIA), 85–105 (GFGPYVGFTIGWGYWLCQIFG), 129–149 (NTIPAIIGGSILIWVFNFIVL), 161–181 (IGTICKLIPLLIFIIITAFFF), 211–231 (STMLVTLWAFIGIEGAVVMSA), 242–262 (ATILGFSGCLIVYVLLSLLPF), 296–316 (IGLLIAILSSWLSWTVIVAEI), 341–361 (VSLYITSALMQVAMLLVYFST), 367–387 (MLSITGVMVLPAYLASAAFLV), 418–438 (IWLIYAGGIKYLFMAIVLLAL), and 461–481 (EVTKITIIAFLALLAIFLFST).

This sequence belongs to the amino acid-polyamine-organocation (APC) superfamily. Basic amino acid/polyamine antiporter (APA) (TC 2.A.3.2) family.

Its subcellular location is the cell inner membrane. Catalyzes the exchange of L-arginine for agmatine. The arginine uptake by the bacterium in the macrophage may be a virulence factor against the host innate immune response. This chain is Arginine/agmatine antiporter (aaxC), found in Chlamydia felis (strain Fe/C-56) (Chlamydophila felis).